Consider the following 371-residue polypeptide: Neuropeptide S receptor (371 aa).

Residues 1 to 21 (MPANFTEGSFDSSGTGQTLDS) show a composition bias toward polar residues. Residues 1–22 (MPANFTEGSFDSSGTGQTLDSS) form a disordered region. Residues 1–52 (MPANFTEGSFDSSGTGQTLDSSPVACTETVTFTEVVEGKEWGSFYYSFKTEQ) lie on the Extracellular side of the membrane. N-linked (GlcNAc...) asparagine glycosylation occurs at asparagine 4. The chain crosses the membrane as a helical span at residues 53–73 (LITLWVLFVFTIVGNSVVLFS). The Cytoplasmic portion of the chain corresponds to 74 to 82 (TWRRKKKSR). The helical transmembrane segment at 83-103 (MTFFVTQLAITDSFTGLVNIL) threads the bilayer. Topologically, residues 104–123 (TDINWRFTGDFTAPDLVCRV) are extracellular. Cysteine 121 and cysteine 197 are oxidised to a cystine. A helical transmembrane segment spans residues 124–144 (VRYLQVVLLYASTYVLVSLSI). Over 145–164 (DRYHAIVYPMKFLQGEKQAR) the chain is Cytoplasmic. Residues 165–185 (VLIVIAWSLSFLFSIPTLIIF) form a helical membrane-spanning segment. The Extracellular portion of the chain corresponds to 186-212 (GKRTLSNGEVQCWALWPDDSYWTPYMT). The helical transmembrane segment at 213–233 (IVAFLVYFIPLTIISIMYGIV) threads the bilayer. Residues 234-275 (IRTIWIKSKTYETVISNCSDGKLCSSYNRGLISKAKIKAIKY) are Cytoplasmic-facing. The chain crosses the membrane as a helical span at residues 276-296 (SIIIILAFICCWSPYFLFDIL). At 297–312 (DNFNLLPDTQERFYAS) the chain is on the extracellular side. A helical membrane pass occupies residues 313–333 (VIIQNLPALNSAINPLIYCVF). At 334–371 (SSSISFPCREQRSQDSRMTFRERTERHEMQILSKPEFI) the chain is on the cytoplasmic side.

It belongs to the G-protein coupled receptor 1 family. Vasopressin/oxytocin receptor subfamily. In terms of tissue distribution, isoform 4 is ubiquitous; it is detected in glandular epithelia of bronchus, stomach, small intestine, colon, uterus, esophagus, spleen, kidney, pancreas, prostate and breast. Isoform 1 is detected in uterus, colon and prostate, and in the smooth muscle cell layer in bronchial and arterial walls (at protein level). Isoform 1 is predominantly expressed in smooth muscle. Isoform 4 is predominantly expressed in epithelial cells. In bronchial biopsies, it is expressed in smooth muscle cells of asthma patients, but not in control patients; whereas in epithelial cells, its expression is consistently stronger in asthma patients.

The protein localises to the cell membrane. The protein resides in the cytoplasm. In terms of biological role, G-protein coupled receptor for neuropeptide S (NPS). Promotes mobilization of intracellular Ca(2+) stores. Inhibits cell growth in response to NPS binding. Involved in pathogenesis of asthma and other IgE-mediated diseases. This Homo sapiens (Human) protein is Neuropeptide S receptor (NPSR1).